Here is a 411-residue protein sequence, read N- to C-terminus: Serine hydroxymethyltransferase (411 aa).

120–122 lines the (6S)-5,6,7,8-tetrahydrofolate pocket; sequence GHL. Lysine 225 carries the N6-(pyridoxal phosphate)lysine modification. 350–352 lines the (6S)-5,6,7,8-tetrahydrofolate pocket; that stretch reads SPF.

This sequence belongs to the SHMT family. In terms of assembly, homodimer. The cofactor is pyridoxal 5'-phosphate.

It is found in the cytoplasm. The catalysed reaction is (6R)-5,10-methylene-5,6,7,8-tetrahydrofolate + glycine + H2O = (6S)-5,6,7,8-tetrahydrofolate + L-serine. Its pathway is one-carbon metabolism; tetrahydrofolate interconversion. It functions in the pathway amino-acid biosynthesis; glycine biosynthesis; glycine from L-serine: step 1/1. Its function is as follows. Catalyzes the reversible interconversion of serine and glycine with tetrahydrofolate (THF) serving as the one-carbon carrier. This reaction serves as the major source of one-carbon groups required for the biosynthesis of purines, thymidylate, methionine, and other important biomolecules. Also exhibits THF-independent aldolase activity toward beta-hydroxyamino acids, producing glycine and aldehydes, via a retro-aldol mechanism. In Lactobacillus johnsonii (strain CNCM I-12250 / La1 / NCC 533), this protein is Serine hydroxymethyltransferase.